The following is a 3010-amino-acid chain: Genome polyprotein (3010 aa).

S2 carries the post-translational modification N-acetylserine; by host. The interval 2-23 (STNPKPQRKTKRNTNRRPQDVK) is interaction with STAT1. Residues 2-58 (STNPKPQRKTKRNTNRRPQDVKFPGGGQIVGGVYLLPRRGPRLGVRATRKTSERSQP) are interaction with EIF2AK2/PKR. Residues 2–59 (STNPKPQRKTKRNTNRRPQDVKFPGGGQIVGGVYLLPRRGPRLGVRATRKTSERSQPR) form an interaction with DDX3X region. The segment at 2 to 75 (STNPKPQRKT…PKARQPEGRA (74 aa)) is disordered. Topologically, residues 2 to 168 (STNPKPQRKT…EDGVNYATGN (167 aa)) are cytoplasmic. 2 consecutive short sequence motifs (nuclear localization signal) follow at residues 5 to 13 (PKPQRKTKR) and 38 to 43 (PRRGPR). Over residues 7–16 (PQRKTKRNTN) the composition is skewed to basic residues. Residues 32–47 (GGVYLLPRRGPRLGVR) show a composition bias toward low complexity. S53 carries the phosphoserine; by host modification. 2 short sequence motifs (nuclear localization signal) span residues 58–64 (PRGRRQP) and 66–71 (PKARQP). Phosphoserine; by host is present on S99. The important for endoplasmic reticulum and mitochondrial localization stretch occupies residues 112–152 (PRRRSRNLGKVIDTLTCGFADLMGYIPLVGAPLGGAARALA). Phosphoserine; by host PKA is present on S116. The segment at 122–173 (VIDTLTCGFADLMGYIPLVGAPLGGAARALAHGVRVLEDGVNYATGNLPGCS) is interaction with APOA2. Positions 164 to 167 (YATG) are important for lipid droplets localization. Residues 169–189 (LPGCSFSIFLLALLSCLTIPA) traverse the membrane as a helical segment. The propeptide at 178-191 (LLALLSCLTIPASA) is ER anchor for the core protein, removed in mature form by host signal peptidase. At 190–358 (SAYEVRNVSG…AGAHWGVLAG (169 aa)) the chain is on the lumenal side. N-linked (GlcNAc...) asparagine; by host glycans are attached at residues N196, N209, N234, and N250. Residues 265-296 (LVGAAALCSAMYVGDLCGSVFLVAQLFTFSPR) are important for fusion. N-linked (GlcNAc...) asparagine; by host glycosylation is present at N305. A helical membrane pass occupies residues 359 to 379 (LAYYSMVGNWAKVLIVMLLFA). Residues 380 to 725 (GVDGGTYVTG…WEYVLLLFLL (346 aa)) lie on the Lumenal side of the membrane. Residues 385-411 (TYVTGGTMAKNTLGITSLFSPGSSQKI) form an HVR1 region. N417 carries an N-linked (GlcNAc...) asparagine; by host glycan. N-linked (GlcNAc...) (high mannose) asparagine; by host glycans are attached at residues N423, N430, and N448. 4 cysteine pairs are disulfide-bonded: C429/C552, C452/C459, C486/C494, and C503/C508. An HVR2 region spans residues 474-482 (YNESHSSDQ). Positions 480–493 (SDQRPYCWHYAPRP) are CD81-binding 1. N-linked (GlcNAc...) (high mannose) asparagine; by host glycosylation is present at N532. A CD81-binding 2 region spans residues 544–551 (PPQGNWFG). An N-linked (GlcNAc...) (high mannose) asparagine; by host glycan is attached at N556. C564 and C569 are joined by a disulfide. N-linked (GlcNAc...) (high mannose) asparagine; by host glycosylation occurs at N576. Intrachain disulfides connect C581–C585, C597–C620, and C607–C644. N-linked (GlcNAc...) (high mannose) asparagine; by host glycans are attached at residues N623 and N645. C652 and C677 form a disulfide bridge. An EIF2AK2/eIF2-alpha phosphorylation homology domain (PePHD) region spans residues 660 to 671 (SELSPLLLSTTE). A helical transmembrane segment spans residues 726-746 (LADARVCACLWMMLLIAQAEA). The Lumenal portion of the chain corresponds to 747 to 757 (ALENLVVLNAA). Residues 758 to 778 (SVAGAHGILSFLVFFCAAWYI) traverse the membrane as a helical segment. Over 779-781 (KGR) the chain is Cytoplasmic. The chain crosses the membrane as a helical span at residues 782–803 (LVPGAAYALYGVWPLLLLLLAL). The Lumenal portion of the chain corresponds to 804–813 (PPRAYAMDRE). Residues 814–834 (MAASCGGAVFVGLILLTLSPH) traverse the membrane as a helical segment. Residues 835 to 838 (YKLF) are Cytoplasmic-facing. The chain crosses the membrane as a helical span at residues 839-859 (LARLIWWLQYFITRAEAHLQV). The Lumenal segment spans residues 860 to 881 (WIPPLNVRGGRDAVILLTCAIH). Residues 882–902 (PELIFTITKILLAILGPLMVL) traverse the membrane as a helical segment. Residues 903–1026 (QAGITKVPYF…SLEGQGWRLL (124 aa)) form the Peptidase C18 domain. Over 903-1657 (QAGITKVPYF…CMSADLEVVT (755 aa)) the chain is Cytoplasmic. The segment at 904-1206 (AGITKVPYFV…PVESMETTMR (303 aa)) is protease NS2-3. Residue C922 is the site of S-palmitoyl cysteine; by host attachment. The segment at 929–949 (AGGHYVQMALMKLAALTGTYV) is interaction with host SCPS1. Catalysis depends on for protease NS2 activity; shared with dimeric partner residues H952, E972, and C993. The Peptidase S29 domain maps to 1027 to 1208 (APITAYSQQT…ESMETTMRSP (182 aa)). Catalysis depends on charge relay system; for serine protease NS3 activity residues H1083 and D1107. C1123 and C1125 together coordinate Zn(2+). S1165 acts as the Charge relay system; for serine protease NS3 activity in catalysis. Residues C1171 and H1175 each contribute to the Zn(2+) site. Residues 1217 to 1369 (PAVPQTFQVA…PNIEEVALSS (153 aa)) enclose the Helicase ATP-binding domain. Residue 1230-1237 (APTGSGKS) coordinates ATP. Positions 1237 and 1317 each coordinate Mg(2+). Residues 1316 to 1319 (DECH) carry the DECH box motif. The RNA-binding stretch occupies residues 1486 to 1497 (QRRGRTGRGRMG). Residues 1658–1678 (STWVLVGGVLAALAAYCLTTG) traverse the membrane as a helical segment. Residues 1679–1690 (SVVIVGRIILSG) are NS3-binding. The Cytoplasmic segment spans residues 1679-1805 (SVVIVGRIIL…SITSPLTTQH (127 aa)). The helical transmembrane segment at 1806 to 1826 (TLLFNILGGWVAAQLAPPSAA) threads the bilayer. The Lumenal segment spans residues 1827-1828 (SA). The helical transmembrane segment at 1829–1849 (FVGAGIAGAAVGSIGLGKVLV) threads the bilayer. The tract at residues 1833 to 1861 (GIAGAAVGSIGLGKVLVDILAGYGAGVAG) is glycine zipper. D1850 is a topological domain (cytoplasmic). Residues 1851 to 1871 (ILAGYGAGVAGALVAFKVMSG) traverse the membrane as a helical segment. Over 1872-1881 (EMPSTEDLVN) the chain is Lumenal. The chain crosses the membrane as a helical span at residues 1882–1902 (LLPAILSPGALVVGVVCAAIL). At 1903-1972 (RRHVGPGEGA…WINEDCSTPC (70 aa)) the chain is on the cytoplasmic side. Residues C1968 and C1972 are each lipidated (S-palmitoyl cysteine; by host). Residues 1973–2003 (SGSWLRDVWDWICTVLTDFKTWLQSKLLPRL) lie within the membrane without spanning it. The tract at residues 1978-1998 (RDVWDWICTVLTDFKTWLQSK) is membrane-binding. Over 2004-2989 (PGVPFFSCQR…YHSLSRARPR (986 aa)) the chain is Cytoplasmic. Residues 2005–2221 (GVPFFSCQRG…KATCTTRHDS (217 aa)) form an RNA-binding region. Zn(2+) is bound by residues C2011, C2029, C2031, and C2052. An FKBP8-binding region spans residues 2120-2208 (EFFTEVDGVR…ASSSASQLSA (89 aa)). Residues 2120–2332 (EFFTEVDGVR…PIPPPRRKRT (213 aa)) form a transcriptional activation region. The tract at residues 2135–2139 (PACKP) is interaction with non-structural protein 4A. The disordered stretch occupies residues 2187–2219 (KRRLARGSPPSLASSSASQLSAPSLKATCTTRH). The segment at 2189-2441 (RLARGSPPSL…PCAAEETKLP (253 aa)) is interaction with host SKP2. Residue S2194 is modified to Phosphoserine; by host; in p56. The segment covering 2194–2211 (SPPSLASSSASQLSAPSL) has biased composition (low complexity). S2197 is subject to Phosphoserine; by host; in p58. S2201 is subject to Phosphoserine; by host; in p56 and p58, regulates intracellular NS5A distribution. 3 positions are modified to phosphoserine; by host; in p58: S2204, S2207, and S2210. ISDR stretches follow at residues 2206-2245 (LSAP…TRVE) and 2210-2249 (SLKA…SENK). An EIF2AK2/PKR-binding region spans residues 2210–2275 (SLKATCTTRH…REVSVPAEIL (66 aa)). An NS4B-binding region spans residues 2249–2306 (KVVILDSFEPLQAEEDEREVSVPAEILRRSRKFPRAMPIWARPDYNPPLLESWKDPDY). The SH3-binding motif lies at 2322 to 2325 (PPIP). Positions 2326–2334 (PPRRKRTVV) match the Nuclear localization signal motif. The tract at residues 2332–2441 (TVVLSESTVS…PCAAEETKLP (110 aa)) is interaction with host IFI27. A Glycyl lysine isopeptide (Lys-Gly) (interchain with G-Cter in ubiquitin) cross-link involves residue K2350. A compositionally biased stretch (polar residues) spans 2351 to 2371 (TFGSSESSAVDSGTATASPDQ). Positions 2351-2407 (TFGSSESSAVDSGTATASPDQPSDDGDAGSDVESYSSMPPLEGEPGDPDLSDGSWST) are disordered. The segment at 2354-2377 (SSESSAVDSGTATASPDQPSDDGD) is V3. A phosphoserine; by host mark is found at S2448 and S2461. Positions 2633–2751 (PMGFAYDTRC…ICESAGTQED (119 aa)) constitute a RdRp catalytic domain. Residues D2639, D2737, and D2738 each coordinate Mg(2+). Residues 2990–3010 (WFMWCLLLLSVGVGIYLLPNR) form a helical membrane-spanning segment.

It belongs to the hepacivirus polyprotein family. Homooligomer. Interacts with E1 (via C-terminus). Interacts with the non-structural protein 5A. Interacts (via N-terminus) with host STAT1 (via SH2 domain); this interaction results in decreased STAT1 phosphorylation and ubiquitin-mediated proteasome-dependent STAT1 degradation, leading to decreased IFN-stimulated gene transcription. Interacts with host STAT3; this interaction constitutively activates STAT3. Interacts with host LTBR receptor. Interacts with host TNFRSF1A receptor and possibly induces apoptosis. Interacts with host HNRPK. Interacts with host YWHAE. Interacts with host UBE3A/E6AP. Interacts with host DDX3X. Interacts with host APOA2. Interacts with host RXRA protein. Interacts with host SP110 isoform 3/Sp110b; this interaction sequesters the transcriptional corepressor SP110 away from the nucleus. Interacts with host CREB3 nuclear transcription protein; this interaction triggers cell transformation. Interacts with host ACY3. Interacts with host C1QR1. Interacts with host RBM24; this interaction, which enhances the interaction of the mature core protein with 5'-UTR, may inhibit viral translation and favor replication. Interacts with host EIF2AK2/PKR; this interaction induces the autophosphorylation of EIF2AK2. Part of the viral assembly initiation complex composed of NS2, E1, E2, NS3, NS4A, NS5A and the mature core protein. As to quaternary structure, forms a heterodimer with envelope glycoprotein E2. Interacts with mature core protein. Interacts with protease NS2. The heterodimer E1/E2 interacts with host CLDN1; this interaction plays a role in viral entry into host cell. Interacts with host SPSB2 (via C-terminus). Part of the viral assembly initiation complex composed of NS2, E1, E2, NS3, NS4A, NS5A and the mature core protein. Interacts with human PLSCR1. Interacts with host NEURL3; this interaction prevents E1 binding to glycoprotein E2. In terms of assembly, forms a heterodimer with envelope glycoprotein E1. Interacts with host CD81 and SCARB1 receptors; these interactions play a role in viral entry into host cell. Interacts with host EIF2AK2/PKR; this interaction inhibits EIF2AK2 and probably allows the virus to evade the innate immune response. Interacts with host CD209/DC-SIGN and CLEC4M/DC-SIGNR. Interact with host SPCS1; this interaction is essential for viral particle assembly. Interacts with protease NS2. The heterodimer E1/E2 interacts with host CLDN1; this interaction plays a role in viral entry into host cell. Part of the viral assembly initiation complex composed of NS2, E1, E2, NS3, NS4A, NS5A and the mature core protein. Interacts with host SLC3A2/4F2hc; the interaction may facilitate viral entry into host cell. Interacts with human PLSCR1. Homohexamer. Homoheptamer. Interacts with protease NS2. As to quaternary structure, homodimer. Interacts with host SPCS1; this interaction is essential for viral particle assembly. Interacts with envelope glycoprotein E1. Interacts with envelope glycoprotein E2. Interacts with viroporin p7. Interacts with serine protease/helicase NS3. Part of the replication complex composed of NS2, NS3, NS4A, NS4B, NS5A and the RNA-directed RNA polymerase embedded in an ER-derived membranous web. Part of the viral assembly initiation complex composed of NS2, E1, E2, NS3, NS4A, NS5A and the mature core protein. In terms of assembly, interacts with protease NS2. Interacts with non-structural protein 4A; this interaction stabilizes the folding of NS3 serine protease. NS3-NS4A interaction is essential for NS3 activation and allows membrane anchorage of the latter. NS3/NS4A complex also prevents phosphorylation of host IRF3, thus preventing the establishment of dsRNA induced antiviral state. Interacts with host MAVS; this interaction leads to the cleavage and inhibition of host MAVS. Interacts with host TICAM1; this interaction leads to the cleavage and inhibition of host TICAM1. Interacts with host TANK-binding kinase/TBK1; this interaction results in the inhibition of the association between TBK1 and IRF3, which leads to the inhibition of IRF3 activation. Interacts with host RBM24. Part of the replication complex composed of NS2, NS3, NS4A, NS4B, NS5A and the RNA-directed RNA polymerase embedded in an ER-derived membranous web. Part of the viral assembly initiation complex composed of NS2, E1, E2, NS3, NS4A, NS5A and the mature core protein. Monomer. Homodimer; dimerization is required for RNA-binding. Interacts with the mature core protein. Interacts with host GRB2. Interacts with host BIN1. Interacts with host PIK3R1. Interacts with host SRCAP. Interacts with host FKBP8. Interacts with host VAPB. Interacts with host EIF2AK2/PKR; this interaction leads to disruption of EIF2AK2 dimerization by NS5A and probably allows the virus to evade the innate immune response. Interacts (via N-terminus) with host PACSIN2 (via N-terminus); this interaction attenuates protein kinase C alpha-mediated phosphorylation of PACSIN2 by disrupting the interaction between PACSIN2 and PRKCA. Interacts (via N-terminus) with host SRC kinase (via SH2 domain). Interacts with most Src-family kinases. Interacts with host IFI27 and SKP2; promotes the ubiquitin-mediated proteasomal degradation of NS5A. Interacts (via N-terminus) with non-structural protein 4A. Interacts with non-structural protein 4B. Interacts with RNA-directed RNA polymerase. Part of the replication complex composed of NS2, NS3, NS4A, NS4B, NS5A and the RNA-directed RNA polymerase embedded in an ER-derived membranous web. Interacts with host GPS2. Interacts with host TNFRSF21; this interaction allows the modulation by the virus of JNK, p38 MAPK, STAT3, and Akt signaling pathways in a DR6-dependent manner. Interacts (via N-terminus) with host CIDEB (via N-terminus); this interaction seems to regulate the association of HCV particles with APOE. Interacts with host CHKA/Choline Kinase-alpha; CHKA bridges host PI4KA and NS5A and potentiates NS5A-stimulated PI4KA activity, which then facilitates the targeting of the ternary complex to the ER for viral replication. Interacts with host SPSB2 (via C-terminus); this interaction targets NS5A for ubiquitination and degradation. Part of the viral assembly initiation complex composed of NS2, E1, E2, NS3, NS4A, NS5A and the mature core protein. It depends on Zn(2+) as a cofactor. Requires Mg(2+) as cofactor. Post-translationally, specific enzymatic cleavages in vivo yield mature proteins. The structural proteins, core, E1, E2 and p7 are produced by proteolytic processing by host signal peptidases. The core protein precursor is synthesized as a 23 kDa, which is retained in the ER membrane through the hydrophobic signal peptide. Cleavage by the signal peptidase releases the 21 kDa mature core protein. The cleavage of the core protein precursor occurs between aminoacids 176 and 188 but the exact cleavage site is not known. Some degraded forms of the core protein appear as well during the course of infection. The other proteins (p7, NS2, NS3, NS4A, NS4B, NS5A and NS5B) are cleaved by the viral proteases. Autoprocessing between NS2 and NS3 is mediated by the NS2 cysteine protease catalytic domain and regulated by the NS3 N-terminal domain. Phosphorylated by host PKC and PKA. In terms of processing, ubiquitinated; mediated by UBE3A and leading to core protein subsequent proteasomal degradation. Post-translationally, highly N-glycosylated. Palmitoylation is required for NS2/3 autoprocessing and E2 recruitment to membranes. In terms of processing, palmitoylated. This modification may play a role in its polymerization or in protein-protein interactions. Post-translationally, cleaved by host caspases which are probably activated by the viral infection. Ubiquitinated. Ubiquitination, most probably at Lys-2350, mediated by host IFI27 and SKP2 leads to proteasomal degradation, restricting viral infection. Ubiquitination by host TRIM22 leads to interruption of viral replication. In terms of processing, phosphorylated on serines in a basal form termed p56. p58 is a hyperphosphorylated form of p56. p56 and p58 coexist in the cell in roughly equivalent amounts. Hyperphosphorylation is dependent on the presence of NS4A. Host CSNK1A1/CKI-alpha or RPS6KB1 kinases may be responsible for NS5A phosphorylation. Post-translationally, tyrosine phosphorylation is essential for the interaction with host SRC. The N-terminus is phosphorylated by host PRK2/PKN2.

The protein resides in the host endoplasmic reticulum membrane. Its subcellular location is the host mitochondrion membrane. It localises to the virion. It is found in the host cytoplasm. The protein localises to the host nucleus. The protein resides in the host lipid droplet. Its subcellular location is the virion membrane. It localises to the host mitochondrion. It is found in the host cell membrane. The protein localises to the host perinuclear region. The catalysed reaction is Hydrolysis of four peptide bonds in the viral precursor polyprotein, commonly with Asp or Glu in the P6 position, Cys or Thr in P1 and Ser or Ala in P1'.. It catalyses the reaction a ribonucleoside 5'-triphosphate + H2O = a ribonucleoside 5'-diphosphate + phosphate + H(+). It carries out the reaction ATP + H2O = ADP + phosphate + H(+). The enzyme catalyses RNA(n) + a ribonucleoside 5'-triphosphate = RNA(n+1) + diphosphate. With respect to regulation, inhibited by the antiviral drug hexamethylene amiloride. Inhibition by amantadine appears to be genotype-dependent. Also inhibited by long-alkyl-chain iminosugar derivatives. Its activity is regulated as follows. Activity is up-regulated by PRK2/PKN2-mediated phosphorylation. Its function is as follows. Packages viral RNA to form a viral nucleocapsid, and promotes virion budding. Participates in the viral particle production as a result of its interaction with the non-structural protein 5A. Binds RNA and may function as a RNA chaperone to induce the RNA structural rearrangements taking place during virus replication. Modulates viral translation initiation by interacting with viral IRES and 40S ribosomal subunit. Affects various cell signaling pathways, host immunity and lipid metabolism. Prevents the establishment of cellular antiviral state by blocking the interferon-alpha/beta (IFN-alpha/beta) and IFN-gamma signaling pathways and by blocking the formation of phosphorylated STAT1 and promoting ubiquitin-mediated proteasome-dependent degradation of STAT1. Activates STAT3 leading to cellular transformation. Regulates the activity of cellular genes, including c-myc and c-fos. May repress the promoter of p53, and sequester CREB3 and SP110 isoform 3/Sp110b in the cytoplasm. Represses cell cycle negative regulating factor CDKN1A, thereby interrupting an important check point of normal cell cycle regulation. Targets transcription factors involved in the regulation of inflammatory responses and in the immune response: suppresses NF-kappa-B activation, and activates AP-1. Binds to dendritic cells (DCs) via C1QR1, resulting in down-regulation of T-lymphocytes proliferation. Alters lipid metabolism by interacting with hepatocellular proteins involved in lipid accumulation and storage. Induces up-regulation of FAS promoter activity, and thereby contributes to the increased triglyceride accumulation in hepatocytes (steatosis). In terms of biological role, forms a heterodimer with envelope glycoprotein E2, which mediates virus attachment to the host cell, virion internalization through clathrin-dependent endocytosis and fusion with host membrane. Fusion with the host cell is most likely mediated by both E1 and E2, through conformational rearrangements of the heterodimer required for fusion rather than a classical class II fusion mechanism. E1/E2 heterodimer binds host apolipoproteins such as APOB and APOE thereby forming a lipo-viro-particle (LVP). APOE associated to the LVP allows the initial virus attachment to cell surface receptors such as the heparan sulfate proteoglycans (HSPGs), syndecan-1 (SDC1), syndecan-1 (SDC2), the low-density lipoprotein receptor (LDLR) and scavenger receptor class B type I (SCARB1). The cholesterol transfer activity of SCARB1 allows E2 exposure and binding of E2 to SCARB1 and the tetraspanin CD81. E1/E2 heterodimer binding on CD81 activates the epithelial growth factor receptor (EGFR) signaling pathway. Diffusion of the complex E1-E2-EGFR-SCARB1-CD81 to the cell lateral membrane allows further interaction with Claudin 1 (CLDN1) and occludin (OCLN) to finally trigger HCV entry. Forms a heterodimer with envelope glycoprotein E1, which mediates virus attachment to the host cell, virion internalization through clathrin-dependent endocytosis and fusion with host membrane. Fusion with the host cell is most likely mediated by both E1 and E2, through conformational rearrangements of the heterodimer required for fusion rather than a classical class II fusion mechanism. The interaction between envelope glycoprotein E2 and host apolipoprotein E/APOE allows the proper assembly, maturation and infectivity of the viral particles. This interaction is probably promoted via the up-regulation of cellular autophagy by the virus. E1/E2 heterodimer binds host apolipoproteins such as APOB and APOE thereby forming a lipo-viro-particle (LVP). APOE associated to the LVP allows the initial virus attachment to cell surface receptors such as the heparan sulfate proteoglycans (HSPGs), syndecan-1 (SDC1), syndecan-1 (SDC2), the low-density lipoprotein receptor (LDLR) and scavenger receptor class B type I (SCARB1). The cholesterol transfer activity of SCARB1 allows E2 exposure and binding of E2 to SCARB1 and the tetraspanin CD81. E1/E2 heterodimer binding on CD81 activates the epithelial growth factor receptor (EGFR) signaling pathway. Diffusion of the complex E1-E2-EGFR-SCARB1-CD81 to the cell lateral membrane allows further interaction with Claudin 1 (CLDN1) and occludin (OCLN) to finally trigger HCV entry. Inhibits host EIF2AK2/PKR activation, preventing the establishment of an antiviral state. Viral ligand for CD209/DC-SIGN and CLEC4M/DC-SIGNR, which are respectively found on dendritic cells (DCs), and on liver sinusoidal endothelial cells and macrophage-like cells of lymph node sinuses. These interactions allow the capture of circulating HCV particles by these cells and subsequent facilitated transmission to permissive cells such as hepatocytes and lymphocyte subpopulations. The interaction between E2 and host amino acid transporter complex formed by SLC3A2 and SLC7A5/LAT1 may facilitate viral entry into host cell. Functionally, ion channel protein that acts as a viroporin and plays an essential role in the assembly, envelopment and secretion of viral particles. Regulates the host cell secretory pathway, which induces the intracellular retention of viral glycoproteins and favors assembly of viral particles. Creates a pore in acidic organelles and releases Ca(2+) and H(+) in the cytoplasm of infected cells, leading to a productive viral infection. High levels of cytoplasmic Ca(2+) may trigger membrane trafficking and transport of viral ER-associated proteins to viroplasms, sites of viral genome replication. This ionic imbalance induces the assembly of the inflammasome complex, which triggers the maturation of pro-IL-1beta into IL-1beta through the action of caspase-1. Targets also host mitochondria and induces mitochondrial depolarization. In addition of its role as a viroporin, acts as a lipid raft adhesion factor. Its function is as follows. Cysteine protease required for the proteolytic auto-cleavage between the non-structural proteins NS2 and NS3. The N-terminus of NS3 is required for the function of NS2 protease (active region NS2-3). Promotes the initiation of viral particle assembly by mediating the interaction between structural and non-structural proteins. In terms of biological role, displays three enzymatic activities: serine protease with a chymotrypsin-like fold, NTPase and RNA helicase. NS3 serine protease, in association with NS4A, is responsible for the cleavages of NS3-NS4A, NS4A-NS4B, NS4B-NS5A and NS5A-NS5B. The NS3/NS4A complex prevents phosphorylation of host IRF3, thus preventing the establishment of dsRNA induced antiviral state. The NS3/NS4A complex induces host amino acid transporter component SLC3A2, thus contributing to HCV propagation. NS3 RNA helicase binds to RNA and unwinds both dsDNA and dsRNA in the 3' to 5' direction, and likely resolves RNA complicated stable secondary structures in the template strand. Binds a single ATP and catalyzes the unzipping of a single base pair of dsRNA. Inhibits host antiviral proteins TBK1 and IRF3 thereby preventing the establishment of an antiviral state. Cleaves host MAVS/CARDIF thereby preventing the establishment of an antiviral state. Cleaves host TICAM1/TRIF, thereby disrupting TLR3 signaling and preventing the establishment of an antiviral state. Peptide cofactor which forms a non-covalent complex with the N-terminal of NS3 serine protease. The NS3/NS4A complex prevents phosphorylation of host IRF3, thus preventing the establishment of dsRNA induced antiviral state. The NS3/NS4A complex induces host amino acid transporter component SLC3A2, thus contributing to HCV propagation. Functionally, induces a specific membrane alteration that serves as a scaffold for the virus replication complex. This membrane alteration gives rise to the so-called ER-derived membranous web that contains the replication complex. NS4B self-interaction contributes to its function in membranous web formation. Promotes host TRIF protein degradation in a CASP8-dependent manner thereby inhibiting host TLR3-mediated interferon signaling. Disrupts the interaction between STING and TBK1 contributing to the inhibition of interferon signaling. Its function is as follows. Phosphorylated protein that is indispensable for viral replication and assembly. Both hypo- and hyperphosphorylated states are required for the viral life cycle. The hyperphosphorylated form of NS5A is an inhibitor of viral replication. Involved in RNA-binding and especially in binding to the viral genome. Zinc is essential for RNA-binding. Participates in the viral particle production as a result of its interaction with the viral mature core protein. Its interaction with host VAPB may target the viral replication complex to vesicles. Down-regulates viral IRES translation initiation. Mediates interferon resistance, presumably by interacting with and inhibiting host EIF2AK2/PKR. Prevents BIN1-induced apoptosis. Acts as a transcriptional activator of some host genes important for viral replication when localized in the nucleus. Via the interaction with host PACSIN2, modulates lipid droplet formation in order to promote virion assembly. Modulates TNFRSF21/DR6 signaling pathway for viral propagation. In terms of biological role, RNA-dependent RNA polymerase that performs primer-template recognition and RNA synthesis during viral replication. Initiates RNA transcription/replication at a flavin adenine dinucleotide (FAD), resulting in a 5'- FAD cap on viral RNAs. In this way, recognition of viral 5' RNA by host pattern recognition receptors can be bypassed, thereby evading activation of antiviral pathways. The polypeptide is Genome polyprotein (Hepatitis C virus genotype 1b (isolate Con1) (HCV)).